Here is a 270-residue protein sequence, read N- to C-terminus: Small ribosomal subunit protein eS1 (270 aa).

2 disordered regions span residues 1 to 21 (MAVG…KKKV) and 238 to 270 (GGGK…QESV).

The protein belongs to the eukaryotic ribosomal protein eS1 family. As to quaternary structure, component of the small ribosomal subunit. Mature ribosomes consist of a small (40S) and a large (60S) subunit. The 40S subunit contains about 33 different proteins and 1 molecule of RNA (18S). The 60S subunit contains about 49 different proteins and 3 molecules of RNA (28S, 5.8S and 5S).

The protein resides in the cytoplasm. This is Small ribosomal subunit protein eS1 from Aedes aegypti (Yellowfever mosquito).